Reading from the N-terminus, the 129-residue chain is MSIEFDDSSRHNMNMTQLMQLGAFDRRSGDDFMVQDFKNGIRDCSGIPVNNRNLAFKAYDAVKQKYDSSIKVFNIQDITIKGATWQHHNCQSTGKWYSQLYDYQNTFIGKQEYNILFDCYSYLKYNLNG.

The protein localises to the cytoplasm. It is found in the cytosol. It localises to the nucleus. This is an uncharacterized protein from Schizosaccharomyces pombe (strain 972 / ATCC 24843) (Fission yeast).